We begin with the raw amino-acid sequence, 445 residues long: Cyclic GMP-AMP phosphodiesterase SMPDL3A (445 aa).

A signal peptide spans 1–22 (MALPGNFLCCLLVAWLCDPGLG). Residues aspartate 42 and histidine 44 each contribute to the Zn(2+) site. An intrachain disulfide couples cysteine 59 to cysteine 78. Asparagine 66 is a glycosylation site (N-linked (GlcNAc...) asparagine). Aspartate 107 is a Zn(2+) binding site. Histidine 111 provides a ligand contact to ATP. A glycan (N-linked (GlcNAc...) asparagine) is linked at asparagine 128. Asparagine 148 lines the Zn(2+) pocket. ATP-binding residues include asparagine 148 and histidine 149. N-linked (GlcNAc...) asparagine glycosylation is found at asparagine 219 and asparagine 235. Residues histidine 249, histidine 290, and histidine 292 each coordinate Zn(2+). N-linked (GlcNAc...) asparagine glycosylation is found at asparagine 353 and asparagine 364. 2 disulfide bridges follow: cysteine 417–cysteine 421 and cysteine 427–cysteine 440.

It belongs to the acid sphingomyelinase family. Monomer. Homodimer; homodimerizes following 2',3'-cGAMP-binding. Zn(2+) serves as cofactor.

The protein localises to the secreted. It catalyses the reaction 2',3'-cGAMP + H2O = 5'-pGpA(2'-5') + H(+). The catalysed reaction is 5'-pGpA(2'-5') + H2O = 5'-GpA(2'-5') + phosphate. The enzyme catalyses a ribonucleoside 5'-triphosphate + H2O = a ribonucleoside 5'-diphosphate + phosphate + H(+). It carries out the reaction ATP + H2O = ADP + phosphate + H(+). Its function is as follows. Cyclic-nucleotide phosphodiesterase that acts as a negative regulator of innate immunity by mediating degradation of 2',3'-cGAMP, thereby inhibiting the cGAS-STING signaling. Specifically linearizes 2',3'-cGAMP into 2'5'-bond pGpA and further hydrolyzes pGpA to produce GpA. Also has in vitro nucleotide phosphodiesterase activity with nucleoside triphosphates, such as ATP. Has in vitro activity with p-nitrophenyl-TMP. Has lower activity with nucleoside diphosphates, and no activity with nucleoside monophosphates. Has in vitro activity with CDP-choline, giving rise to CMP and phosphocholine. Has in vitro activity with CDP-ethanolamine. Does not have sphingomyelin phosphodiesterase activity. The sequence is that of Cyclic GMP-AMP phosphodiesterase SMPDL3A (Smpdl3a) from Rattus norvegicus (Rat).